A 608-amino-acid chain; its full sequence is NADH-quinone oxidoreductase subunit C/D (608 aa).

The segment at 1–199 (MSAASSLAPQ…EPFHLSTEKE (199 aa)) is NADH dehydrogenase I subunit C. The interval 223–608 (DFMFLNLGPN…IDFVMADVDR (386 aa)) is NADH dehydrogenase I subunit D.

This sequence in the N-terminal section; belongs to the complex I 30 kDa subunit family. It in the C-terminal section; belongs to the complex I 49 kDa subunit family. As to quaternary structure, NDH-1 is composed of 13 different subunits. Subunits NuoB, CD, E, F, and G constitute the peripheral sector of the complex.

The protein localises to the cell inner membrane. It catalyses the reaction a quinone + NADH + 5 H(+)(in) = a quinol + NAD(+) + 4 H(+)(out). Functionally, NDH-1 shuttles electrons from NADH, via FMN and iron-sulfur (Fe-S) centers, to quinones in the respiratory chain. The immediate electron acceptor for the enzyme in this species is believed to be ubiquinone. Couples the redox reaction to proton translocation (for every two electrons transferred, four hydrogen ions are translocated across the cytoplasmic membrane), and thus conserves the redox energy in a proton gradient. The sequence is that of NADH-quinone oxidoreductase subunit C/D from Nitrosospira multiformis (strain ATCC 25196 / NCIMB 11849 / C 71).